Here is a 524-residue protein sequence, read N- to C-terminus: uncharacterized protein (524 aa).

The signal sequence occupies residues 1 to 21; sequence MLLRSVWYKLGSLLIILPLTG. The N-palmitoyl cysteine moiety is linked to residue C22. C22 is lipidated: S-diacylglycerol cysteine.

It belongs to the MG067/MG068/MG395 family.

The protein resides in the cell membrane. This is an uncharacterized protein from Mycoplasma pneumoniae (strain ATCC 29342 / M129 / Subtype 1) (Mycoplasmoides pneumoniae).